Consider the following 1201-residue polypeptide: ATP-dependent helicase/deoxyribonuclease subunit B (1201 aa).

It belongs to the helicase family. AddB/RexB type 2 subfamily. Heterodimer of AddA and RexB. Requires Mg(2+) as cofactor.

In terms of biological role, the heterodimer acts as both an ATP-dependent DNA helicase and an ATP-dependent, dual-direction single-stranded exonuclease. Recognizes the chi site generating a DNA molecule suitable for the initiation of homologous recombination. This subunit has 5' -&gt; 3' nuclease activity but not helicase activity. The polypeptide is ATP-dependent helicase/deoxyribonuclease subunit B (Levilactobacillus brevis (strain ATCC 367 / BCRC 12310 / CIP 105137 / JCM 1170 / LMG 11437 / NCIMB 947 / NCTC 947) (Lactobacillus brevis)).